The chain runs to 467 residues: MMKKMTGKSFALSALVAASFMAAGAMASDKTEPRNEVYKDKFANQYNSWHDTAKSEEITDALAGDPSLVILWAGYGFAKDYNAPRGHMYAVTDVRNTLRTGAPTNAEDGPMPMACWSCKSPDVPRLIEEQGEDGYFKGKWAKGGPEVVNTIGCSDCHEKGTPKLRISRPFAERGMEALGTPFDKASKKDKQSMVCGQCHVEYYFEKKDDRKGFVKFPWDSGTTVEQMEAYYDAIEFSDWTHSLSKTPMLKAQHPGYETWKMGVHGKNDVSCVDCHMPKVTNDKGRKYTDHKVGNPFDRFDETCATCHSQSKEFLEGITKERYAKVKELKARAEGQLVKAHFEAAKAWEVGATEAEMKPILTDIRHAQWRWDFAIASHGVAAHAPEEALRILGTAVDKAADARVKLAQLLAKKGVTDAVAIPDISTKAKAQAALGMDMDKMNAEKEAFKKDMLPKWDAEAKKREATYK.

Residues 1-27 (MMKKMTGKSFALSALVAASFMAAGAMA) form the signal peptide. Histidine 87 contacts heme c. Cysteine 115, cysteine 118, and lysine 119 together coordinate heme. Positions 153, 156, 157, 195, 198, and 199 each coordinate heme c. Glutamate 201, tyrosine 202, lysine 250, and glutamine 252 together coordinate Ca(2+). Substrate is bound at residue tyrosine 202. Position 253 (histidine 253) interacts with substrate. Positions 264, 271, 274, 275, 290, 303, 306, 307, and 382 each coordinate heme c.

This sequence belongs to the cytochrome c-552 family. Ca(2+) serves as cofactor. The cofactor is heme c.

It localises to the periplasm. The enzyme catalyses 6 Fe(III)-[cytochrome c] + NH4(+) + 2 H2O = 6 Fe(II)-[cytochrome c] + nitrite + 8 H(+). It functions in the pathway nitrogen metabolism; nitrate reduction (assimilation). Catalyzes the reduction of nitrite to ammonia, consuming six electrons in the process. This Shewanella sp. (strain MR-4) protein is Cytochrome c-552.